Here is a 297-residue protein sequence, read N- to C-terminus: tRNA-cytidine(32) 2-sulfurtransferase (297 aa).

Residues 45-50 carry the PP-loop motif motif; the sequence is SGGKDS. Residues Cys-120, Cys-123, and Cys-211 each coordinate [4Fe-4S] cluster.

This sequence belongs to the TtcA family. In terms of assembly, homodimer. It depends on Mg(2+) as a cofactor. [4Fe-4S] cluster is required as a cofactor.

It localises to the cytoplasm. The enzyme catalyses cytidine(32) in tRNA + S-sulfanyl-L-cysteinyl-[cysteine desulfurase] + AH2 + ATP = 2-thiocytidine(32) in tRNA + L-cysteinyl-[cysteine desulfurase] + A + AMP + diphosphate + H(+). It participates in tRNA modification. Functionally, catalyzes the ATP-dependent 2-thiolation of cytidine in position 32 of tRNA, to form 2-thiocytidine (s(2)C32). The sulfur atoms are provided by the cysteine/cysteine desulfurase (IscS) system. This Vibrio parahaemolyticus serotype O3:K6 (strain RIMD 2210633) protein is tRNA-cytidine(32) 2-sulfurtransferase.